The primary structure comprises 241 residues: 1-(5-phosphoribosyl)-5-[(5-phosphoribosylamino)methylideneamino] imidazole-4-carboxamide isomerase (241 aa).

D8 (proton acceptor) is an active-site residue. Residue D129 is the Proton donor of the active site.

Belongs to the HisA/HisF family.

It is found in the cytoplasm. The enzyme catalyses 1-(5-phospho-beta-D-ribosyl)-5-[(5-phospho-beta-D-ribosylamino)methylideneamino]imidazole-4-carboxamide = 5-[(5-phospho-1-deoxy-D-ribulos-1-ylimino)methylamino]-1-(5-phospho-beta-D-ribosyl)imidazole-4-carboxamide. It participates in amino-acid biosynthesis; L-histidine biosynthesis; L-histidine from 5-phospho-alpha-D-ribose 1-diphosphate: step 4/9. The polypeptide is 1-(5-phosphoribosyl)-5-[(5-phosphoribosylamino)methylideneamino] imidazole-4-carboxamide isomerase (Rhodospirillum rubrum (strain ATCC 11170 / ATH 1.1.1 / DSM 467 / LMG 4362 / NCIMB 8255 / S1)).